We begin with the raw amino-acid sequence, 608 residues long: Threonine--tRNA ligase (608 aa).

The tract at residues 1–143 (MRVLYIHAER…SFKPEEGRAD (143 aa)) is editing domain. Catalytic stretches follow at residues 194 to 490 (PKYL…PRLP) and 195 to 490 (KYLE…PRLP). The Zn(2+) site is built by Cys-287, His-338, and His-459.

The protein belongs to the class-II aminoacyl-tRNA synthetase family. In terms of assembly, homodimer. The cofactor is Zn(2+).

The protein resides in the cytoplasm. The enzyme catalyses tRNA(Thr) + L-threonine + ATP = L-threonyl-tRNA(Thr) + AMP + diphosphate + H(+). Catalyzes the attachment of threonine to tRNA(Thr) in a two-step reaction: L-threonine is first activated by ATP to form Thr-AMP and then transferred to the acceptor end of tRNA(Thr). Also edits incorrectly charged L-seryl-tRNA(Thr). The chain is Threonine--tRNA ligase from Pyrobaculum aerophilum (strain ATCC 51768 / DSM 7523 / JCM 9630 / CIP 104966 / NBRC 100827 / IM2).